We begin with the raw amino-acid sequence, 558 residues long: Alkaline/neutral invertase CINV2 (558 aa).

Phosphoserine is present on residues S16, S19, and S50. T79 is modified (phosphothreonine). S555 is subject to Phosphoserine.

It belongs to the glycosyl hydrolase 100 family.

It localises to the cytoplasm. The protein resides in the cytosol. The enzyme catalyses Hydrolysis of terminal non-reducing beta-D-fructofuranoside residues in beta-D-fructofuranosides.. In terms of biological role, cytosolic invertase that may cleave sucrose into glucose and fructose, and that is involved in the regulation of root growth. May regulate sugar-mediated root development by controlling sucrose catabolism in root cells. The polypeptide is Alkaline/neutral invertase CINV2 (Arabidopsis thaliana (Mouse-ear cress)).